Here is a 332-residue protein sequence, read N- to C-terminus: Ribosomal RNA small subunit methyltransferase H (332 aa).

S-adenosyl-L-methionine-binding positions include 39–41 (GGY), Asp56, Phe83, Asp100, and Gln107.

This sequence belongs to the methyltransferase superfamily. RsmH family.

The protein resides in the cytoplasm. The catalysed reaction is cytidine(1402) in 16S rRNA + S-adenosyl-L-methionine = N(4)-methylcytidine(1402) in 16S rRNA + S-adenosyl-L-homocysteine + H(+). Specifically methylates the N4 position of cytidine in position 1402 (C1402) of 16S rRNA. The protein is Ribosomal RNA small subunit methyltransferase H of Bartonella quintana (strain Toulouse) (Rochalimaea quintana).